The following is a 495-amino-acid chain: Membrane-bound lytic murein transglycosylase F (495 aa).

The N-terminal stretch at 1-29 (MEIRKLSLSTIRSIITSLSVLVLVISASA) is a signal peptide. The segment at 30–273 (TLVRSTPPNV…VTKHFFERHI (244 aa)) is non-LT domain. An LT domain region spans residues 274–495 (DEVTTGEAMV…TAAQGENLSL (222 aa)). Glutamate 320 is an active-site residue.

It in the N-terminal section; belongs to the bacterial solute-binding protein 3 family. The protein in the C-terminal section; belongs to the transglycosylase Slt family.

It localises to the cell outer membrane. The enzyme catalyses Exolytic cleavage of the (1-&gt;4)-beta-glycosidic linkage between N-acetylmuramic acid (MurNAc) and N-acetylglucosamine (GlcNAc) residues in peptidoglycan, from either the reducing or the non-reducing ends of the peptidoglycan chains, with concomitant formation of a 1,6-anhydrobond in the MurNAc residue.. Its function is as follows. Murein-degrading enzyme that degrades murein glycan strands and insoluble, high-molecular weight murein sacculi, with the concomitant formation of a 1,6-anhydromuramoyl product. Lytic transglycosylases (LTs) play an integral role in the metabolism of the peptidoglycan (PG) sacculus. Their lytic action creates space within the PG sacculus to allow for its expansion as well as for the insertion of various structures such as secretion systems and flagella. In Cellvibrio japonicus (strain Ueda107) (Pseudomonas fluorescens subsp. cellulosa), this protein is Membrane-bound lytic murein transglycosylase F.